We begin with the raw amino-acid sequence, 168 residues long: MPRSRINGNFIDKTSSIVANILLRIIPTTSGEKEAFTYYRDGMSAQSEGNYAEALQNYYEAMRPEIDPYDRSYILYNIGLIHTSNGEHTKALEYYFRALERNPFLPQASNNMAVICHYRGEEAIRQGDSEIAEAWFDQAAEYWKQAIALTPGNYIEAQNWLKITGRFE.

TPR repeat units lie at residues 35 to 68, 72 to 105, and 120 to 153; these read AFTY…EIDP, SYIL…NPFL, and GEEA…TPGN.

It belongs to the Ycf3 family.

The protein resides in the plastid. It is found in the chloroplast thylakoid membrane. Essential for the assembly of the photosystem I (PSI) complex. May act as a chaperone-like factor to guide the assembly of the PSI subunits. This Nuphar advena (Common spatterdock) protein is Photosystem I assembly protein Ycf3.